A 186-amino-acid chain; its full sequence is dCTP deaminase (186 aa).

107–112 (KSTYAR) lines the dCTP pocket. Glu133 functions as the Proton donor/acceptor in the catalytic mechanism. DCTP contacts are provided by Gln152, Tyr166, and Gln176.

It belongs to the dCTP deaminase family. In terms of assembly, homotrimer.

The enzyme catalyses dCTP + H2O + H(+) = dUTP + NH4(+). Its pathway is pyrimidine metabolism; dUMP biosynthesis; dUMP from dCTP (dUTP route): step 1/2. Catalyzes the deamination of dCTP to dUTP. This Campylobacter fetus subsp. fetus (strain 82-40) protein is dCTP deaminase.